The chain runs to 154 residues: Aspartate carbamoyltransferase regulatory chain (154 aa).

Residues Cys-109, Cys-114, Cys-138, and Cys-141 each coordinate Zn(2+).

It belongs to the PyrI family. Contains catalytic and regulatory chains. It depends on Zn(2+) as a cofactor.

Its function is as follows. Involved in allosteric regulation of aspartate carbamoyltransferase. This Photobacterium profundum (strain SS9) protein is Aspartate carbamoyltransferase regulatory chain.